A 208-amino-acid chain; its full sequence is 3-isopropylmalate dehydratase small subunit 2 (208 aa).

The disordered stretch occupies residues 163 to 208 (EGERLDNASTSAGHGHAGTPLGDDPAKEDGPRPEQASGHQKEEHHA).

It belongs to the LeuD family. LeuD type 2 subfamily. In terms of assembly, heterodimer of LeuC and LeuD.

It catalyses the reaction (2R,3S)-3-isopropylmalate = (2S)-2-isopropylmalate. It functions in the pathway amino-acid biosynthesis; L-leucine biosynthesis; L-leucine from 3-methyl-2-oxobutanoate: step 2/4. Its function is as follows. Catalyzes the isomerization between 2-isopropylmalate and 3-isopropylmalate, via the formation of 2-isopropylmaleate. In Deinococcus radiodurans (strain ATCC 13939 / DSM 20539 / JCM 16871 / CCUG 27074 / LMG 4051 / NBRC 15346 / NCIMB 9279 / VKM B-1422 / R1), this protein is 3-isopropylmalate dehydratase small subunit 2 (leuD2).